The primary structure comprises 298 residues: Probable endonuclease 4 (298 aa).

The Zn(2+) site is built by His-69, His-111, Glu-146, Asp-180, His-183, His-215, Asp-228, His-230, and Glu-260.

The protein belongs to the AP endonuclease 2 family. The cofactor is Zn(2+).

It carries out the reaction Endonucleolytic cleavage to 5'-phosphooligonucleotide end-products.. Functionally, endonuclease IV plays a role in DNA repair. It cleaves phosphodiester bonds at apurinic or apyrimidinic (AP) sites, generating a 3'-hydroxyl group and a 5'-terminal sugar phosphate. The polypeptide is Probable endonuclease 4 (Bacillus cereus (strain AH187)).